The chain runs to 172 residues: Crossover junction endodeoxyribonuclease RuvC (172 aa).

Active-site residues include D8, E67, and D139. Positions 8, 67, and 139 each coordinate Mg(2+).

Belongs to the RuvC family. As to quaternary structure, homodimer which binds Holliday junction (HJ) DNA. The HJ becomes 2-fold symmetrical on binding to RuvC with unstacked arms; it has a different conformation from HJ DNA in complex with RuvA. In the full resolvosome a probable DNA-RuvA(4)-RuvB(12)-RuvC(2) complex forms which resolves the HJ. Requires Mg(2+) as cofactor.

It localises to the cytoplasm. It carries out the reaction Endonucleolytic cleavage at a junction such as a reciprocal single-stranded crossover between two homologous DNA duplexes (Holliday junction).. The RuvA-RuvB-RuvC complex processes Holliday junction (HJ) DNA during genetic recombination and DNA repair. Endonuclease that resolves HJ intermediates. Cleaves cruciform DNA by making single-stranded nicks across the HJ at symmetrical positions within the homologous arms, yielding a 5'-phosphate and a 3'-hydroxyl group; requires a central core of homology in the junction. The consensus cleavage sequence is 5'-(A/T)TT(C/G)-3'. Cleavage occurs on the 3'-side of the TT dinucleotide at the point of strand exchange. HJ branch migration catalyzed by RuvA-RuvB allows RuvC to scan DNA until it finds its consensus sequence, where it cleaves and resolves the cruciform DNA. This Hahella chejuensis (strain KCTC 2396) protein is Crossover junction endodeoxyribonuclease RuvC.